A 159-amino-acid polypeptide reads, in one-letter code: Regulatory protein RecX (159 aa).

This sequence belongs to the RecX family.

It is found in the cytoplasm. In terms of biological role, modulates RecA activity. In Ralstonia pickettii (strain 12J), this protein is Regulatory protein RecX.